Reading from the N-terminus, the 257-residue chain is High-affinity copper transporter ctrC (257 aa).

Helical transmembrane passes span arginine 79 to leucine 99 and tyrosine 202 to phenylalanine 222.

It belongs to the copper transporter (Ctr) (TC 1.A.56) family. SLC31A subfamily.

Its subcellular location is the cell membrane. The catalysed reaction is Cu(2+)(in) = Cu(2+)(out). In terms of biological role, high-affinity copper transporter of plasma membrane that mediates copper uptake under low copper conditions. The mechanism driving the transmembrane transport of copper has still to be determined. Acts as a potential virulence factor. The sequence is that of High-affinity copper transporter ctrC from Aspergillus fumigatus (strain ATCC MYA-4609 / CBS 101355 / FGSC A1100 / Af293) (Neosartorya fumigata).